The primary structure comprises 368 residues: Serine/threonine-protein phosphatase PP2A-like PPG1 (368 aa).

Mn(2+) contacts are provided by aspartate 50, histidine 52, aspartate 78, and asparagine 110. The Proton donor role is filled by histidine 111. Histidine 161 and histidine 247 together coordinate Mn(2+).

It belongs to the PPP phosphatase family. PP-2A subfamily. In terms of assembly, inactivated in a complex with phosphatase methylesterase PPE1 (PP2Ai). Interacts with phosphatase 2A activator RRD1, which can reactivate PP2Ai by dissociating the catalytic subunit from the complex. Interacts with TAP42. Mn(2+) is required as a cofactor. Post-translationally, reversibly methyl esterified on Leu-368 by leucine carboxyl methyltransferase 1 (PPM1) and protein phosphatase methylesterase 1 (PPE1). Carboxyl methylation influences the affinity of the catalytic subunit for the different regulatory subunits, thereby modulating the PP2A holoenzyme's substrate specificity, enzyme activity and cellular localization.

It carries out the reaction O-phospho-L-seryl-[protein] + H2O = L-seryl-[protein] + phosphate. It catalyses the reaction O-phospho-L-threonyl-[protein] + H2O = L-threonyl-[protein] + phosphate. Functionally, involved in glycogen accumulation. The chain is Serine/threonine-protein phosphatase PP2A-like PPG1 (PPG1) from Saccharomyces cerevisiae (strain ATCC 204508 / S288c) (Baker's yeast).